Here is a 301-residue protein sequence, read N- to C-terminus: uncharacterized protein (301 aa).

The 58-residue stretch at 1–58 (MDIRHLTYFLEVARLKSFTKASQSLYVSQPTISKMIKNLEEELGIELFYRNGRQVELT) folds into the HTH lysR-type domain. The H-T-H motif DNA-binding region spans 18–37 (FTKASQSLYVSQPTISKMIK).

The protein belongs to the LysR transcriptional regulatory family.

This is an uncharacterized protein from Bacillus subtilis (strain 168).